The primary structure comprises 213 residues: Type II restriction enzyme BamHI (213 aa).

Mg(2+)-binding residues include E77, D94, E111, and F112. The Proton acceptor role is filled by E113.

In terms of assembly, homodimer. Mg(2+) serves as cofactor.

The catalysed reaction is Endonucleolytic cleavage of DNA to give specific double-stranded fragments with terminal 5'-phosphates.. A P subtype restriction enzyme that recognizes the double-stranded sequence 5'-GGATCC-3' and cleaves after G-1. This chain is Type II restriction enzyme BamHI, found in Bacillus amyloliquefaciens (Bacillus velezensis).